The primary structure comprises 101 residues: MARPLEQAVAAIVCTFQEYAGRCGDKYKLCQAELKELLQKELATWTPTEFRECDYNKFMSVLDTNKDCEVDFVEYVRSLACLCLYCHEYFKDCPSEPPCSQ.

The residue at position 2 (Ala-2) is an N-acetylalanine. 2 EF-hand domains span residues 12-47 (IVCT…TWTP) and 50-85 (FREC…LCLY). Ca(2+) is bound by residues Lys-28 and Glu-33. Cys-30 and Cys-68 are oxidised to a cystine. Residue Arg-51 is modified to Citrulline; by PAD3. Ca(2+) contacts are provided by Asp-63, Asn-65, Asp-67, Glu-69, and Glu-74. Cys-81 and Cys-99 are oxidised to a cystine. Residues Cys-83, Cys-86, His-87, and Cys-93 each coordinate Zn(2+).

This sequence belongs to the S-100 family. As to quaternary structure, homodimer and homotetramer for the citrullinated form. More than half of the arginine residues undergo citrullination by PAD1 and PAD2. Arg-51 is specifically citrullinated by PAD3 and promotes tetramerization. Skin specific, specifically expressed at the inner endocuticle of hair fibers.

The protein localises to the cytoplasm. Its function is as follows. Binds both calcium and zinc. May be involved in calcium-dependent cuticle cell differentiation, hair shaft and hair cuticular barrier formation. This Homo sapiens (Human) protein is Protein S100-A3 (S100A3).